Here is a 247-residue protein sequence, read N- to C-terminus: SPX domain-containing protein 5 (247 aa).

In terms of domain architecture, SPX spans 1–139; sequence MKFGKRLKRQ…GGVLRLPVIA (139 aa). The segment at 224–247 is disordered; the sequence is SDWLIQSVQPPPPPPPSSPLIIPT. Over residues 232 to 241 the composition is skewed to pro residues; the sequence is QPPPPPPPSS.

This is SPX domain-containing protein 5 (SPX5) from Oryza sativa subsp. indica (Rice).